Consider the following 135-residue polypeptide: Germinal center-associated signaling and motility-like protein (135 aa).

Residues 1 to 68 form a disordered region; the sequence is MGNYLLRKLS…ENGSGSEEVC (68 aa). Basic and acidic residues predominate over residues 22–48; it reads GNPDEERKRQEMTTFERKLQDQDKKSQ. A coiled-coil region spans residues 26–50; that stretch reads EERKRQEMTTFERKLQDQDKKSQEV. Positions 51 to 66 are enriched in low complexity; sequence SSTSNQENENGSGSEE.

The polypeptide is Germinal center-associated signaling and motility-like protein (GCSAML) (Homo sapiens (Human)).